Reading from the N-terminus, the 61-residue chain is MSNAKTVKVTLVKSLIGRLESHKACARGLGLKKIRQTVEVLDTPENRGMINKISYLLKFEG.

This sequence belongs to the universal ribosomal protein uL30 family. As to quaternary structure, part of the 50S ribosomal subunit.

This is Large ribosomal subunit protein uL30 from Chromobacterium violaceum (strain ATCC 12472 / DSM 30191 / JCM 1249 / CCUG 213 / NBRC 12614 / NCIMB 9131 / NCTC 9757 / MK).